A 418-amino-acid polypeptide reads, in one-letter code: Tektin-1 (418 aa).

Coiled-coil stretches lie at residues 20 to 107 (NKSQ…SYKE), 134 to 177 (QELQ…DLKD), 266 to 308 (NGLK…QQEG), and 332 to 383 (VAQY…ENTI).

It belongs to the tektin family. As to quaternary structure, microtubule inner protein component of sperm flagellar doublet microtubules. In terms of processing, ubiquitinated, leading to its degradation. Deubiquitinated by USP16, promoting its stability. In terms of tissue distribution, predominantly expressed in testis.

It is found in the cytoplasm. The protein localises to the cytoskeleton. The protein resides in the cilium axoneme. It localises to the flagellum axoneme. Microtubule inner protein (MIP) part of the dynein-decorated doublet microtubules (DMTs) in cilia and flagellar axoneme. Forms filamentous polymers in the walls of ciliary and flagellar microtubules. The chain is Tektin-1 (Tekt1) from Rattus norvegicus (Rat).